A 201-amino-acid polypeptide reads, in one-letter code: MDNTLTLIKTVYEINQLEEIAAPQIILAGRSNVGKSSLINCLASRKKLAKISSTPGKTRSLNYYEVSPHGYYIVDLPGYGYARCSKTERAKWAKLIDKYLLDNAYVAAAAVLLDSRHNPQQNDLDLISYFKHCNIPIIPIMTKSDKTKQKDRSKVQKKWEDILKVKPICVSSKTGMNRTRLWNLLDVTAIPELAEIEEETE.

The 171-residue stretch at 21–191 (AAPQIILAGR…WNLLDVTAIP (171 aa)) folds into the EngB-type G domain. GTP is bound by residues 29 to 36 (GRSNVGKS), 56 to 60 (GKTRS), 75 to 78 (DLPG), 142 to 145 (TKSD), and 168 to 172 (ICVSS). The Mg(2+) site is built by Ser36 and Thr58.

Belongs to the TRAFAC class TrmE-Era-EngA-EngB-Septin-like GTPase superfamily. EngB GTPase family. Mg(2+) serves as cofactor.

Its function is as follows. Necessary for normal cell division and for the maintenance of normal septation. The chain is Probable GTP-binding protein EngB from Maridesulfovibrio salexigens (strain ATCC 14822 / DSM 2638 / NCIMB 8403 / VKM B-1763) (Desulfovibrio salexigens).